Reading from the N-terminus, the 627-residue chain is 1-deoxy-D-xylulose-5-phosphate synthase (627 aa).

Residues H80 and 121–123 (GHS) each bind thiamine diphosphate. Position 152 (D152) interacts with Mg(2+). Thiamine diphosphate-binding positions include 153–154 (GA), N181, Y288, and E370. A Mg(2+)-binding site is contributed by N181.

This sequence belongs to the transketolase family. DXPS subfamily. In terms of assembly, homodimer. It depends on Mg(2+) as a cofactor. Thiamine diphosphate is required as a cofactor.

It carries out the reaction D-glyceraldehyde 3-phosphate + pyruvate + H(+) = 1-deoxy-D-xylulose 5-phosphate + CO2. It functions in the pathway metabolic intermediate biosynthesis; 1-deoxy-D-xylulose 5-phosphate biosynthesis; 1-deoxy-D-xylulose 5-phosphate from D-glyceraldehyde 3-phosphate and pyruvate: step 1/1. In terms of biological role, catalyzes the acyloin condensation reaction between C atoms 2 and 3 of pyruvate and glyceraldehyde 3-phosphate to yield 1-deoxy-D-xylulose-5-phosphate (DXP). This Aliivibrio fischeri (strain ATCC 700601 / ES114) (Vibrio fischeri) protein is 1-deoxy-D-xylulose-5-phosphate synthase.